A 170-amino-acid polypeptide reads, in one-letter code: Small ribosomal subunit protein uS3mA (170 aa).

A mitochondrion-targeting transit peptide spans 1–30 (MAAPVMSALGRLQGLIRTERSLLTHVQSRC).

The protein belongs to the universal ribosomal protein uS3 family. As to quaternary structure, component of the mitochondrial ribosome small subunit (28S) which comprises a 12S rRNA and about 30 distinct proteins.

It localises to the mitochondrion. The polypeptide is Small ribosomal subunit protein uS3mA (mrps24-a) (Xenopus laevis (African clawed frog)).